Consider the following 477-residue polypeptide: Glycogen synthase (477 aa).

Position 15 (K15) interacts with ADP-alpha-D-glucose.

This sequence belongs to the glycosyltransferase 1 family. Bacterial/plant glycogen synthase subfamily.

The enzyme catalyses [(1-&gt;4)-alpha-D-glucosyl](n) + ADP-alpha-D-glucose = [(1-&gt;4)-alpha-D-glucosyl](n+1) + ADP + H(+). The protein operates within glycan biosynthesis; glycogen biosynthesis. Its function is as follows. Synthesizes alpha-1,4-glucan chains using ADP-glucose. This Shigella boydii serotype 4 (strain Sb227) protein is Glycogen synthase.